The sequence spans 184 residues: Inosine triphosphate pyrophosphatase (184 aa).

ITP is bound at residue 10 to 15; sequence TGNVKK. Position 37 (E37) interacts with Mg(2+). ITP is bound by residues K49, 65 to 66, K82, 141 to 144, K164, and 169 to 170; these read DT, FGWD, and HR.

It belongs to the HAM1 NTPase family. As to quaternary structure, homodimer. It depends on Mg(2+) as a cofactor. The cofactor is Mn(2+).

Its subcellular location is the cytoplasm. It carries out the reaction ITP + H2O = IMP + diphosphate + H(+). The enzyme catalyses dITP + H2O = dIMP + diphosphate + H(+). It catalyses the reaction XTP + H2O = XMP + diphosphate + H(+). Pyrophosphatase that hydrolyzes non-canonical purine nucleotides such as inosine triphosphate (ITP), deoxyinosine triphosphate (dITP) or xanthosine 5'-triphosphate (XTP) to their respective monophosphate derivatives. The enzyme does not distinguish between the deoxy- and ribose forms. Probably excludes non-canonical purines from RNA and DNA precursor pools, thus preventing their incorporation into RNA and DNA and avoiding chromosomal lesions. This chain is Inosine triphosphate pyrophosphatase, found in Caenorhabditis elegans.